The following is a 93-amino-acid chain: Small ribosomal subunit protein bS20 (93 aa).

Positions 1–18 (MPLHKSAEKRLRQSEKRN) are enriched in basic and acidic residues. A disordered region spans residues 1–25 (MPLHKSAEKRLRQSEKRNARNRARK).

Belongs to the bacterial ribosomal protein bS20 family.

Binds directly to 16S ribosomal RNA. The chain is Small ribosomal subunit protein bS20 from Chlorobium chlorochromatii (strain CaD3).